Consider the following 98-residue polypeptide: NADH-ubiquinone oxidoreductase chain 4L (98 aa).

Helical transmembrane passes span 2–22 (PSIS…MLIF), 29–49 (SLLC…LTIL), and 61–81 (ILLL…LVTV).

This sequence belongs to the complex I subunit 4L family. Core subunit of respiratory chain NADH dehydrogenase (Complex I) which is composed of 45 different subunits.

The protein localises to the mitochondrion inner membrane. The catalysed reaction is a ubiquinone + NADH + 5 H(+)(in) = a ubiquinol + NAD(+) + 4 H(+)(out). In terms of biological role, core subunit of the mitochondrial membrane respiratory chain NADH dehydrogenase (Complex I) which catalyzes electron transfer from NADH through the respiratory chain, using ubiquinone as an electron acceptor. Part of the enzyme membrane arm which is embedded in the lipid bilayer and involved in proton translocation. The sequence is that of NADH-ubiquinone oxidoreductase chain 4L (MT-ND4L) from Lemur catta (Ring-tailed lemur).